The sequence spans 122 residues: MNAALKRRQARLKRQVRVRRKLRGTPEMPRLCVFRSAKHIYAQIIEDVTGKTLVSASTVNSDVVEGLENTGNVEAAKAVGKAIAQKALGMDIKNVVFDRNGFLYHGRVKTLAEAAREAGLSF.

This sequence belongs to the universal ribosomal protein uL18 family. Part of the 50S ribosomal subunit; part of the 5S rRNA/L5/L18/L25 subcomplex. Contacts the 5S and 23S rRNAs.

This is one of the proteins that bind and probably mediate the attachment of the 5S RNA into the large ribosomal subunit, where it forms part of the central protuberance. The protein is Large ribosomal subunit protein uL18 of Syntrophotalea carbinolica (strain DSM 2380 / NBRC 103641 / GraBd1) (Pelobacter carbinolicus).